The sequence spans 1064 residues: WD repeat-containing protein on Y chromosome (1064 aa).

WD repeat units follow at residues 153–197 (EEVT…IRTA), 326–365 (RVPLGVSTFFVAESHNIVVTGGPDTFVRIWDVYIPTEPSA), 369–408 (GHNGGIVMVFVQPEENKVYSVDYQKIIKVWDLQEHTLLQT), 459–498 (THAAPVSVVLYNRLFRNIVTCGLDSYIIVWDPWSGRRKII), 511–550 (IIDIEITAATFDPLEQFLLTGARDGTLKIWNYNNAVVVRN), 598–638 (FHTD…RRYS), 746–785 (KTGDCVLTMCTDRKNRYIYTGTAFGYIKVWHIVNYPEAEK), and 827–866 (AHLKAINSIAFINLPKIVFRGSHDYSCRLWTQGGRYLGTL). The span at 914 to 924 (PAKRAEVKAPE) shows a compositional bias: basic and acidic residues. Disordered stretches follow at residues 914–935 (PAKRAEVKAPEDRDEETAQTDD) and 1023–1064 (GSAL…QQSE). Positions 925-935 (DRDEETAQTDD) are enriched in acidic residues.

This Drosophila pseudoobscura pseudoobscura (Fruit fly) protein is WD repeat-containing protein on Y chromosome.